The sequence spans 422 residues: Acyl-[acyl-carrier-protein] desaturase 6, chloroplastic (422 aa).

The transit peptide at 1–46 directs the protein to the chloroplast; that stretch reads MAATATMAMPLANRLRCKPNTNSSSPSRTLFGRRVTMISSSRWMCR. Fe cation is bound by residues Glu-154, Glu-192, His-195, Glu-245, Glu-280, and His-283.

The protein belongs to the fatty acid desaturase type 2 family. Homodimer. The cofactor is Fe(2+).

The protein resides in the plastid. Its subcellular location is the chloroplast. It functions in the pathway lipid metabolism; fatty acid metabolism. In terms of biological role, introduces a cis double bond in the acyl chain of an acyl-[acyl-carrier protein]. The chain is Acyl-[acyl-carrier-protein] desaturase 6, chloroplastic from Oryza sativa subsp. indica (Rice).